The chain runs to 54 residues: Large ribosomal subunit protein bL33 (54 aa).

It belongs to the bacterial ribosomal protein bL33 family.

The polypeptide is Large ribosomal subunit protein bL33 (Elusimicrobium minutum (strain Pei191)).